A 32-amino-acid polypeptide reads, in one-letter code: Photosystem II reaction center protein T (32 aa).

The helical transmembrane segment at 3–23 (ALVYTFLLIGTLVVIFFAIFF) threads the bilayer.

The protein belongs to the PsbT family. PSII is composed of 1 copy each of membrane proteins PsbA, PsbB, PsbC, PsbD, PsbE, PsbF, PsbH, PsbI, PsbJ, PsbK, PsbL, PsbM, PsbT, PsbX, PsbY, PsbZ, Psb30/Ycf12, at least 3 peripheral proteins of the oxygen-evolving complex and a large number of cofactors. It forms dimeric complexes.

It is found in the plastid. Its subcellular location is the chloroplast thylakoid membrane. Found at the monomer-monomer interface of the photosystem II (PS II) dimer, plays a role in assembly and dimerization of PSII. PSII is a light-driven water plastoquinone oxidoreductase, using light energy to abstract electrons from H(2)O, generating a proton gradient subsequently used for ATP formation. The sequence is that of Photosystem II reaction center protein T from Emiliania huxleyi (Coccolithophore).